The chain runs to 226 residues: DELTA-alicitoxin-Pse1b (226 aa).

Residues 1 to 21 (MRHFVVFLYMFLALSIPTAFA) form the signal peptide. The propeptide occupies 22–45 (KKHIVTKKGNHQDITNDNEGENAE). The tract at residues 50 to 59 (TVAGAVIAGG) is plays an important role in the hemolytic activity. Residues 58-77 (GGELALKILTKILYEIGKID) form an N-terminal region region. 6 residues coordinate phosphocholine: Ser-101, Val-134, Ser-152, Pro-154, Tyr-180, and Tyr-184. Residues 152–167 (SVPFDYNLYSNWWNVK) form a trp-rich region, which is important for the binding to lipid membrane region.

This sequence belongs to the actinoporin family. Sea anemone subfamily. In terms of assembly, octamer or nonamer in membranes. Monomer in the soluble state.

Its subcellular location is the secreted. The protein localises to the nematocyst. It localises to the target cell membrane. In terms of biological role, pore-forming protein that forms cations-selective hydrophilic pores of around 1 nm and causes cytolysis. Pore formation is a multi-step process that involves specific recognition of membrane sphingomyelin (but neither cholesterol nor phosphatidylcholine) using aromatic rich region and adjacent phosphocholine (POC) binding site, firm binding to the membrane (mainly driven by hydrophobic interactions) accompanied by the transfer of the N-terminal region to the lipid-water interface and finally pore formation after oligomerization of monomers. This chain is DELTA-alicitoxin-Pse1b, found in Phyllodiscus semoni (Night anemone).